Here is a 145-residue protein sequence, read N- to C-terminus: Large ribosomal subunit protein uL11 (145 aa).

The protein belongs to the universal ribosomal protein uL11 family. As to quaternary structure, part of the ribosomal stalk of the 50S ribosomal subunit. Interacts with L10 and the large rRNA to form the base of the stalk. L10 forms an elongated spine to which L12 dimers bind in a sequential fashion forming a multimeric L10(L12)X complex. One or more lysine residues are methylated.

In terms of biological role, forms part of the ribosomal stalk which helps the ribosome interact with GTP-bound translation factors. This is Large ribosomal subunit protein uL11 from Persephonella marina (strain DSM 14350 / EX-H1).